Here is a 139-residue protein sequence, read N- to C-terminus: Putative pre-16S rRNA nuclease (139 aa).

This sequence belongs to the YqgF nuclease family.

The protein localises to the cytoplasm. Could be a nuclease involved in processing of the 5'-end of pre-16S rRNA. In Pectobacterium carotovorum subsp. carotovorum (strain PC1), this protein is Putative pre-16S rRNA nuclease.